The primary structure comprises 414 residues: Glutathione gamma-glutamylcysteinyltransferase (414 aa).

Residues 37–256 form the Peptidase C83 domain; sequence QLKKSFYKRQ…GYVLLEPMHI (220 aa).

This sequence belongs to the phytochelatin synthase family.

The enzyme catalyses [Glu(-Cys)](n)-Gly + glutathione + H(+) = [Glu(-Cys)](n+1)-Gly + glycine. In terms of biological role, required for detoxification of heavy metals such as cadmium and arsenate. The protein is Glutathione gamma-glutamylcysteinyltransferase of Schizosaccharomyces pombe (strain 972 / ATCC 24843) (Fission yeast).